A 402-amino-acid chain; its full sequence is Formate-dependent phosphoribosylglycinamide formyltransferase (402 aa).

Residues 23–24 (EL) and glutamate 83 contribute to the N(1)-(5-phospho-beta-D-ribosyl)glycinamide site. Residues arginine 116, lysine 157, 162–167 (SSGKGQ), 197–200 (ESQI), and glutamate 205 each bind ATP. The ATP-grasp domain maps to 121–316 (RLAAEELGLP…EFELHARAIL (196 aa)). Mg(2+) is bound by residues glutamate 275 and glutamate 287. Residues aspartate 294, lysine 363, and 370 to 371 (RR) contribute to the N(1)-(5-phospho-beta-D-ribosyl)glycinamide site.

Belongs to the PurK/PurT family. Homodimer.

It catalyses the reaction N(1)-(5-phospho-beta-D-ribosyl)glycinamide + formate + ATP = N(2)-formyl-N(1)-(5-phospho-beta-D-ribosyl)glycinamide + ADP + phosphate + H(+). The protein operates within purine metabolism; IMP biosynthesis via de novo pathway; N(2)-formyl-N(1)-(5-phospho-D-ribosyl)glycinamide from N(1)-(5-phospho-D-ribosyl)glycinamide (formate route): step 1/1. Functionally, involved in the de novo purine biosynthesis. Catalyzes the transfer of formate to 5-phospho-ribosyl-glycinamide (GAR), producing 5-phospho-ribosyl-N-formylglycinamide (FGAR). Formate is provided by PurU via hydrolysis of 10-formyl-tetrahydrofolate. The chain is Formate-dependent phosphoribosylglycinamide formyltransferase from Acinetobacter baumannii (strain ATCC 17978 / DSM 105126 / CIP 53.77 / LMG 1025 / NCDC KC755 / 5377).